The sequence spans 261 residues: Glucosamine-6-phosphate deaminase (261 aa).

The Proton acceptor; for enolization step role is filled by Asp-67. Asp-136 serves as the catalytic For ring-opening step. The Proton acceptor; for ring-opening step role is filled by His-138. Glu-143 acts as the For ring-opening step in catalysis.

Belongs to the glucosamine/galactosamine-6-phosphate isomerase family. NagB subfamily.

It carries out the reaction alpha-D-glucosamine 6-phosphate + H2O = beta-D-fructose 6-phosphate + NH4(+). Its pathway is amino-sugar metabolism; N-acetylneuraminate degradation; D-fructose 6-phosphate from N-acetylneuraminate: step 5/5. Its function is as follows. Catalyzes the reversible isomerization-deamination of glucosamine 6-phosphate (GlcN6P) to form fructose 6-phosphate (Fru6P) and ammonium ion. The polypeptide is Glucosamine-6-phosphate deaminase (Streptomyces coelicolor (strain ATCC BAA-471 / A3(2) / M145)).